We begin with the raw amino-acid sequence, 230 residues long: Ropporin-1-like protein (230 aa).

Residues Pro17–Pro54 form the RIIa domain.

It belongs to the ropporin family. As to quaternary structure, component of the axonemal radial spoke complex 1 (RS1), at least composed of spoke head proteins RSPH1, RSPH3, RSPH9 and the cilia-specific component RSPH4A or sperm-specific component RSPH6A, spoke stalk proteins RSPH14, DNAJB13, DYDC1, ROPN1L and NME5, and the anchor protein IQUB. May interact with AKAP3. Interacts with FSCB; the interaction increases upon spermatozoa capacitation conditions. Interacts with CFAP61. Post-translationally, sumoylated, sumoylation decreases upon spermatozoa capacitation conditions.

It localises to the cell projection. The protein localises to the cilium. It is found in the flagellum. Functionally, functions as part of axonemal radial spoke complexes that play an important part in the motility of sperm and cilia. Important for male fertility. With ROPN1, involved in fibrous sheath integrity and sperm motility, plays a role in PKA-dependent signaling processes required for spermatozoa capacitation. The sequence is that of Ropporin-1-like protein (ROPN1L) from Macaca fascicularis (Crab-eating macaque).